The sequence spans 122 residues: UPF0102 protein NGR_c36770 (122 aa).

The protein belongs to the UPF0102 family.

In Sinorhizobium fredii (strain NBRC 101917 / NGR234), this protein is UPF0102 protein NGR_c36770.